We begin with the raw amino-acid sequence, 1500 residues long: Myosin-8 (1500 aa).

A Myosin N-terminal SH3-like domain is found at 8–57; that stretch reads AVGSHVWVEDPDEAWLDGEVVEINGDQIKVLCASGKQVVVKDSNIYPKDV. Residues 62-732 form the Myosin motor domain; the sequence is SGVEDMTRLA…QMADLDTRRT (671 aa). Residues 156-163 and 210-218 each bind ATP; these read GESGAGKT and NNNSSRFGK. 4 actin-binding regions span residues 496–530, 532–555, 590–613, and 613–635; these read LIEKKPGGIIALLDEACMFPRSTHETFAQKLYQTY, NHKRFTKPKLARSDFTICHYAGDV, FPPVSDDSKQSKFSSIGTRFKQQL, and LVSLLEILNTTEPHYIRCIKPNN. IQ domains follow at residues 735-764, 758-787, 783-812, 806-835, 831-860, and 854-883; these read LGRSASIIQRKVRSYLAQKTFIQLRISATQ, LRISATQIQAVCRGYLARSIYEGMRREAAA, REAAALKIQRDLRKFLARKAYTELFSATIL, LFSATILIQAGMRGMVSRKELCLRRQTKAA, QTKAATIIQTRCRVYLARLHYRKLKKAAIT, and LKKAAITTQCAWRGKVARKELKNLKMAARE. Positions 884 to 1049 form a coiled coil; it reads TGALQEAKNK…TEKQIMLQQT (166 aa). The region spanning 1146–1447 is the Dilute domain; that stretch reads DRLIEMIGSA…ISSMRALMTE (302 aa).

The protein belongs to the TRAFAC class myosin-kinesin ATPase superfamily. Myosin family. Plant myosin class XI subfamily. As to quaternary structure, homodimer.

Its subcellular location is the cytoplasm. Functionally, myosin heavy chain that is required for the cell cycle-regulated transport of various organelles and proteins for their segregation. Functions by binding with its tail domain to receptor proteins on organelles and exerting force with its N-terminal motor domain against actin filaments, thereby transporting its cargo along polarized actin cables. In Arabidopsis thaliana (Mouse-ear cress), this protein is Myosin-8 (XI-B).